The sequence spans 78 residues: Exodeoxyribonuclease 7 small subunit (78 aa).

It belongs to the XseB family. As to quaternary structure, heterooligomer composed of large and small subunits.

The protein resides in the cytoplasm. The catalysed reaction is Exonucleolytic cleavage in either 5'- to 3'- or 3'- to 5'-direction to yield nucleoside 5'-phosphates.. Its function is as follows. Bidirectionally degrades single-stranded DNA into large acid-insoluble oligonucleotides, which are then degraded further into small acid-soluble oligonucleotides. The polypeptide is Exodeoxyribonuclease 7 small subunit (Idiomarina loihiensis (strain ATCC BAA-735 / DSM 15497 / L2-TR)).